The primary structure comprises 509 residues: Ceramide glucosyltransferase (509 aa).

The Lumenal segment spans residues 1–42 (MIMQLGLTSLAFLALKCDAYNIAPKIDTPNVEPFAPSGGLKL). Residues 43-63 (LAIVAIIWYVVVLLVAYYGFF) form a helical membrane-spanning segment. The Cytoplasmic segment spans residues 64 to 384 (EIMQKFSKRK…EATLLEPTTE (321 aa)). A short sequence motif (D1) is located at residue aspartate 123. Position 179 (aspartate 179) is a short sequence motif, D2. Position 321 (aspartate 321) is a short sequence motif, D3. Catalysis depends on aspartate 321, which acts as the Proton acceptor. A (Q/R)XXRW motif is present at residues 361–365 (RRIRW). The helical transmembrane segment at 385–405 (CLLCGTFGTFAISTLFLQSYF) threads the bilayer. The Lumenal segment spans residues 406 to 408 (NWK). The chain crosses the membrane as a helical span at residues 409 to 429 (FFIFHLLVWMVTDYTQFHILL). Residues 430 to 466 (TNASQDTATCNVPYFAEPNFNAYGSPFESSNLRTFHR) are Cytoplasmic-facing. A helical transmembrane segment spans residues 467–487 (WVLYWLLREVLALPIWISAML). The Lumenal segment spans residues 488 to 509 (GTRIIWRNRPFRINVDLSAEEL).

The protein belongs to the glycosyltransferase 2 family.

The protein localises to the golgi apparatus membrane. The catalysed reaction is an N-acylsphing-4-enine + UDP-alpha-D-glucose = a beta-D-glucosyl-(1&lt;-&gt;1')-N-acylsphing-4-enine + UDP + H(+). The protein operates within lipid metabolism; sphingolipid metabolism. In terms of biological role, catalyzes the final step in the biosynthesis of the membrane lipid glucosylceramide (GluCer), the transfer of glucose to ceramide. Glucosylceramides play important roles in growth, differentiation and pathogenicity. This Komagataella phaffii (strain GS115 / ATCC 20864) (Yeast) protein is Ceramide glucosyltransferase.